We begin with the raw amino-acid sequence, 223 residues long: MOB-like protein phocein (223 aa).

Residues M1–N23 form a disordered region. Positions 92, 97, 169, and 174 each coordinate Zn(2+).

It belongs to the MOB1/phocein family.

It localises to the cytoplasm. The protein resides in the perinuclear region. It is found in the membrane. Its subcellular location is the golgi apparatus. The protein localises to the golgi stack membrane. May play a role in membrane trafficking, specifically in membrane budding reactions. In Caenorhabditis elegans, this protein is MOB-like protein phocein.